A 251-amino-acid chain; its full sequence is Demethylmenaquinone methyltransferase (251 aa).

Residues threonine 66, aspartate 87, and 115–116 (NA) each bind S-adenosyl-L-methionine.

This sequence belongs to the class I-like SAM-binding methyltransferase superfamily. MenG/UbiE family.

It carries out the reaction a 2-demethylmenaquinol + S-adenosyl-L-methionine = a menaquinol + S-adenosyl-L-homocysteine + H(+). The protein operates within quinol/quinone metabolism; menaquinone biosynthesis; menaquinol from 1,4-dihydroxy-2-naphthoate: step 2/2. In terms of biological role, methyltransferase required for the conversion of demethylmenaquinol (DMKH2) to menaquinol (MKH2). The sequence is that of Demethylmenaquinone methyltransferase from Symbiobacterium thermophilum (strain DSM 24528 / JCM 14929 / IAM 14863 / T).